We begin with the raw amino-acid sequence, 490 residues long: Myocilin (490 aa).

An N-terminal signal peptide occupies residues 1 to 18 (MPAVQLLLLAGLVWGAGA). Positions 55 to 170 (SAIQDLQRDS…QEVARLARGQ (116 aa)) form a coiled coil. Residues 168-187 (RGQCPQARDTSQDVPAGSRE) form a disordered region. One can recognise an Olfactomedin-like domain in the interval 230 to 489 (GCGELVWVGQ…MVTYDIKLSK (260 aa)). C231 and C419 are joined by a disulfide. D366, N414, A415, I463, and D464 together coordinate Ca(2+). The Microbody targeting signal motif lies at 488 to 490 (SKI).

In terms of assembly, homodimer (via N-terminus). Can also form higher oligomers. Interacts with OLFM3, FN1, NRCAM, GLDN and NFASC. Interacts (via N-terminus) with MYL2. Interacts with SFRP1, FRZB, FZD7, FZD10, FZD1 and WIF1; regulates Wnt signaling. Interacts with SNTA1; regulates muscle hypertrophy. Interacts with ERBB2 and ERBB3; activates ERBB2-ERBB3 signaling pathway. Interacts with SNCG; affects its secretion and its aggregation. Palmitoylated. In terms of processing, glycosylated. Post-translationally, undergoes a calcium-dependent proteolytic cleavage at Arg-212 by CAPN2 in the endoplasmic reticulum. The result is the production of two fragments, one of 35 kDa containing the C-terminal olfactomedin-like domain, and another of 20 kDa containing the N-terminal leucine zipper-like domain. Detected in eye aqueous humor (at protein level).

The protein resides in the secreted. The protein localises to the golgi apparatus. Its subcellular location is the cytoplasmic vesicle. It localises to the extracellular space. It is found in the extracellular matrix. The protein resides in the extracellular exosome. The protein localises to the mitochondrion. Its subcellular location is the mitochondrion intermembrane space. It localises to the mitochondrion inner membrane. It is found in the mitochondrion outer membrane. The protein resides in the rough endoplasmic reticulum. The protein localises to the cell projection. Its subcellular location is the cilium. It localises to the endoplasmic reticulum. Functionally, secreted glycoprotein regulating the activation of different signaling pathways in adjacent cells to control different processes including cell adhesion, cell-matrix adhesion, cytoskeleton organization and cell migration. Promotes substrate adhesion, spreading and formation of focal contacts. Negatively regulates cell-matrix adhesion and stress fiber assembly through Rho protein signal transduction. Modulates the organization of actin cytoskeleton by stimulating the formation of stress fibers through interactions with components of Wnt signaling pathways. Promotes cell migration through activation of PTK2 and the downstream phosphatidylinositol 3-kinase signaling. Plays a role in bone formation and promotes osteoblast differentiation in a dose-dependent manner through mitogen-activated protein kinase signaling. Mediates myelination in the peripheral nervous system through ERBB2/ERBB3 signaling. Plays a role as a regulator of muscle hypertrophy through the components of dystrophin-associated protein complex. Involved in positive regulation of mitochondrial depolarization. Plays a role in neurite outgrowth. May participate in the obstruction of fluid outflow in the trabecular meshwork. In Oryctolagus cuniculus (Rabbit), this protein is Myocilin.